Consider the following 328-residue polypeptide: Ribosomal RNA small subunit methyltransferase H (328 aa).

S-adenosyl-L-methionine contacts are provided by residues 64–66 (GGH), D83, F112, D129, and Q136.

Belongs to the methyltransferase superfamily. RsmH family.

The protein resides in the cytoplasm. The catalysed reaction is cytidine(1402) in 16S rRNA + S-adenosyl-L-methionine = N(4)-methylcytidine(1402) in 16S rRNA + S-adenosyl-L-homocysteine + H(+). In terms of biological role, specifically methylates the N4 position of cytidine in position 1402 (C1402) of 16S rRNA. This Bdellovibrio bacteriovorus (strain ATCC 15356 / DSM 50701 / NCIMB 9529 / HD100) protein is Ribosomal RNA small subunit methyltransferase H.